We begin with the raw amino-acid sequence, 610 residues long: Glutamine--fructose-6-phosphate aminotransferase [isomerizing] (610 aa).

The active-site Nucleophile; for GATase activity is the cysteine 2. In terms of domain architecture, Glutamine amidotransferase type-2 spans 2-218 (CGIVGAVAQR…EGDIAEITRR (217 aa)). 2 SIS domains span residues 278 to 426 (IVDS…VKGH) and 459 to 600 (LAED…VDQP). Residue lysine 605 is the For Fru-6P isomerization activity of the active site.

Homodimer.

It is found in the cytoplasm. It catalyses the reaction D-fructose 6-phosphate + L-glutamine = D-glucosamine 6-phosphate + L-glutamate. Its function is as follows. Catalyzes the first step in hexosamine metabolism, converting fructose-6P into glucosamine-6P using glutamine as a nitrogen source. The polypeptide is Glutamine--fructose-6-phosphate aminotransferase [isomerizing] (Haemophilus influenzae (strain ATCC 51907 / DSM 11121 / KW20 / Rd)).